Consider the following 207-residue polypeptide: Ribosomal RNA small subunit methyltransferase G (207 aa).

Residues Gly73, Leu78, 124-125 (VE), and Arg139 each bind S-adenosyl-L-methionine.

This sequence belongs to the methyltransferase superfamily. RNA methyltransferase RsmG family.

The protein resides in the cytoplasm. It catalyses the reaction guanosine(527) in 16S rRNA + S-adenosyl-L-methionine = N(7)-methylguanosine(527) in 16S rRNA + S-adenosyl-L-homocysteine. Specifically methylates the N7 position of guanine in position 527 of 16S rRNA. The polypeptide is Ribosomal RNA small subunit methyltransferase G (Escherichia fergusonii (strain ATCC 35469 / DSM 13698 / CCUG 18766 / IAM 14443 / JCM 21226 / LMG 7866 / NBRC 102419 / NCTC 12128 / CDC 0568-73)).